Here is a 621-residue protein sequence, read N- to C-terminus: Putative zinc metalloprotease CPn_0344/CP_0416/CPj0344/CpB0350 (621 aa).

H20 is a Zn(2+) binding site. Residue E21 is part of the active site. Residue H24 coordinates Zn(2+). Helical transmembrane passes span 103–125 (ILVL…SILY), 561–583 (VLNL…WEIV), and 596–613 (ILVP…FLTF).

Belongs to the peptidase M50B family. Zn(2+) is required as a cofactor.

It localises to the cell inner membrane. The protein is Putative zinc metalloprotease CPn_0344/CP_0416/CPj0344/CpB0350 of Chlamydia pneumoniae (Chlamydophila pneumoniae).